A 361-amino-acid polypeptide reads, in one-letter code: Chorismate synthase (361 aa).

NADP(+)-binding residues include Arg-48 and Arg-54. Residues 125–127 (RSS), 238–239 (NA), Gly-278, 293–297 (KPTSS), and Arg-319 contribute to the FMN site.

This sequence belongs to the chorismate synthase family. Homotetramer. The cofactor is FMNH2.

It catalyses the reaction 5-O-(1-carboxyvinyl)-3-phosphoshikimate = chorismate + phosphate. The protein operates within metabolic intermediate biosynthesis; chorismate biosynthesis; chorismate from D-erythrose 4-phosphate and phosphoenolpyruvate: step 7/7. In terms of biological role, catalyzes the anti-1,4-elimination of the C-3 phosphate and the C-6 proR hydrogen from 5-enolpyruvylshikimate-3-phosphate (EPSP) to yield chorismate, which is the branch point compound that serves as the starting substrate for the three terminal pathways of aromatic amino acid biosynthesis. This reaction introduces a second double bond into the aromatic ring system. In Shigella boydii serotype 18 (strain CDC 3083-94 / BS512), this protein is Chorismate synthase.